We begin with the raw amino-acid sequence, 569 residues long: Glutamate--tRNA ligase (569 aa).

The 'HIGH' region motif lies at 99–109 (PEPNGYPTLGH).

The protein belongs to the class-I aminoacyl-tRNA synthetase family. Glutamate--tRNA ligase type 2 subfamily.

Its subcellular location is the cytoplasm. The enzyme catalyses tRNA(Glu) + L-glutamate + ATP = L-glutamyl-tRNA(Glu) + AMP + diphosphate. Its function is as follows. Catalyzes the attachment of glutamate to tRNA(Glu) in a two-step reaction: glutamate is first activated by ATP to form Glu-AMP and then transferred to the acceptor end of tRNA(Glu). This Korarchaeum cryptofilum (strain OPF8) protein is Glutamate--tRNA ligase.